Consider the following 342-residue polypeptide: Nucleoid-associated protein Sfri_2491 (342 aa).

The protein belongs to the YejK family.

The protein resides in the cytoplasm. The protein localises to the nucleoid. The polypeptide is Nucleoid-associated protein Sfri_2491 (Shewanella frigidimarina (strain NCIMB 400)).